The sequence spans 499 residues: Proline--tRNA ligase (499 aa).

The span at 1 to 17 (MTKDGGKKDNQGQDKKA) shows a compositional bias: basic and acidic residues. The interval 1-21 (MTKDGGKKDNQGQDKKAQQYG) is disordered.

Belongs to the class-II aminoacyl-tRNA synthetase family. ProS type 3 subfamily. In terms of assembly, homodimer.

The protein localises to the cytoplasm. It catalyses the reaction tRNA(Pro) + L-proline + ATP = L-prolyl-tRNA(Pro) + AMP + diphosphate. Catalyzes the attachment of proline to tRNA(Pro) in a two-step reaction: proline is first activated by ATP to form Pro-AMP and then transferred to the acceptor end of tRNA(Pro). Can inadvertently accommodate and process cysteine. This chain is Proline--tRNA ligase (proS), found in Deinococcus radiodurans (strain ATCC 13939 / DSM 20539 / JCM 16871 / CCUG 27074 / LMG 4051 / NBRC 15346 / NCIMB 9279 / VKM B-1422 / R1).